A 369-amino-acid polypeptide reads, in one-letter code: MSEHNPAGAPGASTEVRVAIVGVGNCASSLVQGIEYYQNADDTSTVPGLMHVRFGPYHVRDVKFVAAFDVDAKKVGVDLSDAIFTSENNTIKIADVPPTNVVVQRGPTLDGIGKYYTDTIELSDVPPVDVVQALTEAKTDVLVSYLPVGSEEADKFYAQCAINARVAFVNALPVFIASDPVWAKKFADARVPIVGDDIKSQVGATITHRVMAKLFEDRGVQLDRTMQLNVGGNMDFLNMLERERVQSKKISKTQAVTSNVHREFNTKDIHIGPSDHVGWLDDRKWAYVRLEGRGFGDVPLNLEYKLEVWDSPNSAGVIIDAVRAAKIAKDRGIGGPVIPASSYLMKSPPQQLPDEIARAQLEEFIIDTK.

The protein belongs to the myo-inositol 1-phosphate synthase family.

This is an uncharacterized protein from Mycobacterium leprae (strain TN).